A 282-amino-acid chain; its full sequence is Probable phosphatase C1620.13 (282 aa).

Catalysis depends on histidine 61, which acts as the Tele-phosphohistidine intermediate. Residue glutamate 135 is the Proton donor/acceptor of the active site.

This sequence belongs to the phosphoglycerate mutase family. BPG-dependent PGAM subfamily.

The protein resides in the nucleus. The polypeptide is Probable phosphatase C1620.13 (Schizosaccharomyces pombe (strain 972 / ATCC 24843) (Fission yeast)).